The following is a 237-amino-acid chain: Mediator of RNA polymerase II transcription subunit 20 (237 aa).

Belongs to the Mediator complex subunit 20 family. Component of the Mediator complex.

The protein localises to the nucleus. Its function is as follows. Component of the Mediator complex, a coactivator involved in the regulated transcription of nearly all RNA polymerase II-dependent genes. Mediator functions as a bridge to convey information from gene-specific regulatory proteins to the basal RNA polymerase II transcription machinery. Mediator is recruited to promoters by direct interactions with regulatory proteins and serves as a scaffold for the assembly of a functional preinitiation complex with RNA polymerase II and the general transcription factors. The polypeptide is Mediator of RNA polymerase II transcription subunit 20 (SRB2) (Scheffersomyces stipitis (strain ATCC 58785 / CBS 6054 / NBRC 10063 / NRRL Y-11545) (Yeast)).